We begin with the raw amino-acid sequence, 138 residues long: Protein NrdI (138 aa).

It belongs to the NrdI family.

Functionally, probably involved in ribonucleotide reductase function. The polypeptide is Protein NrdI (Beutenbergia cavernae (strain ATCC BAA-8 / DSM 12333 / CCUG 43141 / JCM 11478 / NBRC 16432 / NCIMB 13614 / HKI 0122)).